Consider the following 397-residue polypeptide: Lysophospholipid transporter LplT (397 aa).

Topologically, residues 1–17 are periplasmic; that stretch reads MSESVHTNTSLWSKGMK. Residues 18 to 38 form a helical membrane-spanning segment; sequence AVIVAQFLSAFGDNALLFATL. Residues 39-52 lie on the Cytoplasmic side of the membrane; the sequence is ALLKAQFYPEWSQP. The chain crosses the membrane as a helical span at residues 53-73; sequence ILQMVFVGAYILFAPFVGQVA. Over 74 to 90 the chain is Periplasmic; the sequence is DSFAKGRVMMFANGLKL. Residues 91 to 111 traverse the membrane as a helical segment; that stretch reads LGAASICFGINPFLGYTLVGV. Over 112 to 144 the chain is Cytoplasmic; the sequence is GAAAYSPAKYGILGELTTGSKLVKANGLMEAST. The chain crosses the membrane as a helical span at residues 145–165; that stretch reads IAAILLGSVAGGVLADWHVLV. Residue Ala-166 is a topological domain, periplasmic. A helical membrane pass occupies residues 167–187; it reads LAACALAYGGAVVANIYIPKL. Over 188-226 the chain is Cytoplasmic; the sequence is AAARPGQSWNLINMTRSFLNACTSLWCNGETRFSLVGTS. The helical transmembrane segment at 227–247 threads the bilayer; it reads LFWGAGVTLRFLLVLWVPVAL. Topologically, residues 248–256 are periplasmic; that stretch reads GITDNATPT. The chain crosses the membrane as a helical span at residues 257–277; that stretch reads YLNAMVAIGIVVGAGAAAKLV. Residues 278-280 are Cytoplasmic-facing; that stretch reads TLE. The helical transmembrane segment at 281–301 threads the bilayer; the sequence is TVSRCMPAGILIGVVVLIFSL. Residues 302–304 are Periplasmic-facing; that stretch reads QHE. Residues 305–325 traverse the membrane as a helical segment; it reads LLPAYALLMLIGVLGGFFVVP. Over 326-343 the chain is Cytoplasmic; that stretch reads LNALLQERGKKSVGAGNA. The chain crosses the membrane as a helical span at residues 344–364; that stretch reads IAVQNLGENSAMLLMLGIYSL. Residues 365 to 366 lie on the Periplasmic side of the membrane; that stretch reads AV. Residues 367–387 traverse the membrane as a helical segment; that stretch reads MVGIPVVPIGIGFGALFALAI. Over 388-397 the chain is Cytoplasmic; it reads TALWIWQRRH.

This sequence belongs to the major facilitator superfamily. LplT (TC 2.A.1.42) family.

Its subcellular location is the cell inner membrane. Catalyzes the facilitated diffusion of 2-acyl-glycero-3-phosphoethanolamine (2-acyl-GPE) into the cell. The chain is Lysophospholipid transporter LplT from Shigella dysenteriae serotype 1 (strain Sd197).